The sequence spans 103 residues: Histone H4 (103 aa).

Residues 1–14 show a composition bias toward gly residues; the sequence is MTGRGKGGKGLGKG. The segment at 1-20 is disordered; it reads MTGRGKGGKGLGKGGAKRHR. K6 and K13 each carry N6-acetyl-N6-methyllysine; alternate. The DNA-binding element occupies 17–21; that stretch reads KRHRK.

The protein belongs to the histone H4 family. The nucleosome is a histone octamer containing two molecules each of H2A, H2B, H3 and H4 assembled in one H3-H4 heterotetramer and two H2A-H2B heterodimers. The octamer wraps approximately 147 bp of DNA.

The protein resides in the nucleus. Its subcellular location is the chromosome. In terms of biological role, core component of nucleosome. Nucleosomes wrap and compact DNA into chromatin, limiting DNA accessibility to the cellular machineries which require DNA as a template. Histones thereby play a central role in transcription regulation, DNA repair, DNA replication and chromosomal stability. DNA accessibility is regulated via a complex set of post-translational modifications of histones, also called histone code, and nucleosome remodeling. The polypeptide is Histone H4 (Diadromus pulchellus (Parasitic wasp)).